Reading from the N-terminus, the 134-residue chain is Arsenate reductase (134 aa).

Residues Cys-11, Cys-83, and Cys-90 each act as nucleophile in the active site. Cystine bridges form between Cys-11/Cys-83 and Cys-83/Cys-90.

This sequence belongs to the low molecular weight phosphotyrosine protein phosphatase family. Thioredoxin-coupled ArsC subfamily.

The protein localises to the cytoplasm. It carries out the reaction arsenate + [thioredoxin]-dithiol + H(+) = arsenite + [thioredoxin]-disulfide + H2O. Its function is as follows. Catalyzes the reduction of arsenate [As(V)] to arsenite [As(III)]. The sequence is that of Arsenate reductase from Bacillus cereus (strain Q1).